The following is a 56-amino-acid chain: uncharacterized protein (56 aa).

This is an uncharacterized protein from Saccharomyces cerevisiae (strain ATCC 204508 / S288c) (Baker's yeast).